Here is a 561-residue protein sequence, read N- to C-terminus: uncharacterized protein (561 aa).

Residues 187–217 (DDEELSEEEILNRIDKLQIELEQVIGKQKNI) adopt a coiled-coil conformation.

This is an uncharacterized protein from Dictyostelium discoideum (Social amoeba).